We begin with the raw amino-acid sequence, 369 residues long: 3-dehydroquinate synthase (369 aa).

Residues 75-80 (DGEEHK), 109-113 (GVIGD), 133-134 (TT), lysine 146, lysine 155, and 173-176 (TLKT) contribute to the NAD(+) site. Zn(2+) contacts are provided by glutamate 188, histidine 251, and histidine 268.

It belongs to the sugar phosphate cyclases superfamily. Dehydroquinate synthase family. Requires Co(2+) as cofactor. It depends on Zn(2+) as a cofactor. The cofactor is NAD(+).

It is found in the cytoplasm. It catalyses the reaction 7-phospho-2-dehydro-3-deoxy-D-arabino-heptonate = 3-dehydroquinate + phosphate. The protein operates within metabolic intermediate biosynthesis; chorismate biosynthesis; chorismate from D-erythrose 4-phosphate and phosphoenolpyruvate: step 2/7. Catalyzes the conversion of 3-deoxy-D-arabino-heptulosonate 7-phosphate (DAHP) to dehydroquinate (DHQ). This chain is 3-dehydroquinate synthase, found in Legionella pneumophila (strain Corby).